We begin with the raw amino-acid sequence, 374 residues long: Lipid-A-disaccharide synthase (374 aa).

This sequence belongs to the LpxB family.

It carries out the reaction a lipid X + a UDP-2-N,3-O-bis[(3R)-3-hydroxyacyl]-alpha-D-glucosamine = a lipid A disaccharide + UDP + H(+). Its pathway is bacterial outer membrane biogenesis; LPS lipid A biosynthesis. Its function is as follows. Condensation of UDP-2,3-diacylglucosamine and 2,3-diacylglucosamine-1-phosphate to form lipid A disaccharide, a precursor of lipid A, a phosphorylated glycolipid that anchors the lipopolysaccharide to the outer membrane of the cell. This Pseudomonas fluorescens (strain ATCC BAA-477 / NRRL B-23932 / Pf-5) protein is Lipid-A-disaccharide synthase.